A 301-amino-acid chain; its full sequence is Envoplakin-like protein (301 aa).

Residues 1-88 (MQASADQVER…ERVTQECAEY (88 aa)) adopt a coiled-coil conformation. 2 disordered regions span residues 18-41 (RLQQDRLNSEQSQALQHQQETGSS) and 118-166 (GLRR…PEPI). Residues 26 to 41 (SEQSQALQHQQETGSS) show a composition bias toward polar residues. The segment covering 136-151 (GAQHRAEGDQRPRRAA) has biased composition (basic and acidic residues).

Belongs to the plakin or cytolinker family.

This Homo sapiens (Human) protein is Envoplakin-like protein (EVPLL).